We begin with the raw amino-acid sequence, 360 residues long: Alanine racemase (360 aa).

K34 serves as the catalytic Proton acceptor; specific for D-alanine. The residue at position 34 (K34) is an N6-(pyridoxal phosphate)lysine. R129 lines the substrate pocket. Y254 functions as the Proton acceptor; specific for L-alanine in the catalytic mechanism. M302 contributes to the substrate binding site.

It belongs to the alanine racemase family. The cofactor is pyridoxal 5'-phosphate.

It catalyses the reaction L-alanine = D-alanine. The protein operates within amino-acid biosynthesis; D-alanine biosynthesis; D-alanine from L-alanine: step 1/1. Catalyzes the interconversion of L-alanine and D-alanine. May also act on other amino acids. The sequence is that of Alanine racemase (alr) from Pectobacterium atrosepticum (strain SCRI 1043 / ATCC BAA-672) (Erwinia carotovora subsp. atroseptica).